The following is a 241-amino-acid chain: 2,3-bisphosphoglycerate-dependent phosphoglycerate mutase (241 aa).

His-12 acts as the Tele-phosphohistidine intermediate in catalysis. Substrate-binding positions include 24-25, Arg-61, 117-120, and Lys-128; these read SG and ERYY. Glu-117 functions as the Proton donor/acceptor in the catalytic mechanism.

The protein belongs to the phosphoglycerate mutase family. BPG-dependent PGAM subfamily.

It carries out the reaction (2R)-2-phosphoglycerate = (2R)-3-phosphoglycerate. It functions in the pathway carbohydrate degradation; glycolysis; pyruvate from D-glyceraldehyde 3-phosphate: step 3/5. Its function is as follows. Catalyzes the interconversion of 2-phosphoglycerate and 3-phosphoglycerate. This is 2,3-bisphosphoglycerate-dependent phosphoglycerate mutase from Methanosarcina mazei (strain ATCC BAA-159 / DSM 3647 / Goe1 / Go1 / JCM 11833 / OCM 88) (Methanosarcina frisia).